A 375-amino-acid chain; its full sequence is Adiponectin receptor protein 1 (375 aa).

A disordered region spans residues 1–60 (MSSHKGSVVAQGNGAPASNREADTVELAELGPLLEEKGKRVIANPPKAEEEQTCPVPQEE). Residues 1 to 136 (MSSHKGSVVA…SIFRIHTETG (136 aa)) are Cytoplasmic-facing. A helical membrane pass occupies residues 137-157 (NIWTHLLGFVLFLFLGILTML). At 158-170 (RPNMYFMAPLQEK) the chain is on the extracellular side. A helical membrane pass occupies residues 171–191 (VVFGMFFLGAVLCLSFSWLFH). His-191 provides a ligand contact to Zn(2+). Over 192 to 203 (TVYCHSEKVSRT) the chain is Cytoplasmic. Residues 204-224 (FSKLDYSGIALLIMGSFVPWL) form a helical membrane-spanning segment. Residues 225-234 (YYSFYCSPQP) are Extracellular-facing. The chain crosses the membrane as a helical span at residues 235–255 (RLIYLSIVCVLGISAIIVAQW). Residues 256–264 (DRFATPKHR) are Cytoplasmic-facing. Residues 265–285 (QTRAGVFLGLGLSGVVPTMHF) traverse the membrane as a helical segment. Residues 286–298 (TIAEGFVKATTVG) are Extracellular-facing. A helical transmembrane segment spans residues 299-319 (QMGWFFLMAVMYITGAGLYAA). At 320 to 337 (RIPERFFPGKFDIWFQSH) the chain is on the cytoplasmic side. Zn(2+) contacts are provided by His-337 and His-341. A helical membrane pass occupies residues 338–358 (QIFHVLVVAAAFVHFYGVSNL). Residues 359-375 (QEFRYGLEGGCTDDTLL) lie on the Extracellular side of the membrane.

Belongs to the ADIPOR family. As to quaternary structure, may form homooligomers and heterooligomers with ADIPOR2. Interacts with APPL2 (via BAR domain); hinders the accessibility of APPL1 to ADIPOR1; negatively regulates adiponectin signaling; ADIPOQ dissociates this interaction and facilitates the recruitment of APPL1 to ADIPOR1. Interacts with APPL1; ADIPOQ enhances this interaction; inhibites adiponectin-stimulated binding of APPL2 to ADIPOR1. In terms of tissue distribution, widely expressed. Highly expressed in heart and skeletal muscle. Expressed at intermediate level in brain, spleen, kidney, liver, placenta, lung and peripheral blood leukocytes. Weakly expressed in colon, thymus and small intestine.

It localises to the cell membrane. Receptor for ADIPOQ, an essential hormone secreted by adipocytes that regulates glucose and lipid metabolism. Required for normal glucose and fat homeostasis and for maintaining a normal body weight. ADIPOQ-binding activates a signaling cascade that leads to increased AMPK activity, and ultimately to increased fatty acid oxidation, increased glucose uptake and decreased gluconeogenesis. Has high affinity for globular adiponectin and low affinity for full-length adiponectin. The sequence is that of Adiponectin receptor protein 1 from Homo sapiens (Human).